The primary structure comprises 311 residues: Methionyl-tRNA formyltransferase (311 aa).

110–113 (SLLP) contributes to the (6S)-5,6,7,8-tetrahydrofolate binding site.

This sequence belongs to the Fmt family.

The catalysed reaction is L-methionyl-tRNA(fMet) + (6R)-10-formyltetrahydrofolate = N-formyl-L-methionyl-tRNA(fMet) + (6S)-5,6,7,8-tetrahydrofolate + H(+). Functionally, attaches a formyl group to the free amino group of methionyl-tRNA(fMet). The formyl group appears to play a dual role in the initiator identity of N-formylmethionyl-tRNA by promoting its recognition by IF2 and preventing the misappropriation of this tRNA by the elongation apparatus. This is Methionyl-tRNA formyltransferase from Streptococcus uberis (strain ATCC BAA-854 / 0140J).